The primary structure comprises 386 residues: Glucose-1-phosphate adenylyltransferase (386 aa).

Residues Y99, G164, 179–180 (EK), and S190 contribute to the alpha-D-glucose 1-phosphate site.

It belongs to the bacterial/plant glucose-1-phosphate adenylyltransferase family. In terms of assembly, homotetramer.

The enzyme catalyses alpha-D-glucose 1-phosphate + ATP + H(+) = ADP-alpha-D-glucose + diphosphate. Its pathway is glycan biosynthesis; glycogen biosynthesis. Functionally, involved in the biosynthesis of ADP-glucose, a building block required for the elongation reactions to produce glycogen. Catalyzes the reaction between ATP and alpha-D-glucose 1-phosphate (G1P) to produce pyrophosphate and ADP-Glc. This is Glucose-1-phosphate adenylyltransferase from Clostridioides difficile (strain 630) (Peptoclostridium difficile).